A 158-amino-acid chain; its full sequence is Cyclic pyranopterin monophosphate synthase (158 aa).

Substrate contacts are provided by residues 76 to 78 (LCH) and 114 to 115 (ME). D129 is a catalytic residue.

It belongs to the MoaC family. As to quaternary structure, homohexamer; trimer of dimers.

The enzyme catalyses (8S)-3',8-cyclo-7,8-dihydroguanosine 5'-triphosphate = cyclic pyranopterin phosphate + diphosphate. It functions in the pathway cofactor biosynthesis; molybdopterin biosynthesis. Catalyzes the conversion of (8S)-3',8-cyclo-7,8-dihydroguanosine 5'-triphosphate to cyclic pyranopterin monophosphate (cPMP). The sequence is that of Cyclic pyranopterin monophosphate synthase from Shewanella sediminis (strain HAW-EB3).